Consider the following 753-residue polypeptide: Polyadenylate-binding protein, cytoplasmic and nuclear (753 aa).

Positions 1-26 are enriched in polar residues; the sequence is MSAEVSTTPAADNTVNGTPEATNAAA. A disordered region spans residues 1–52; that stretch reads MSAEVSTTPAADNTVNGTPEATNAAATSAPEVTAVESASPSTTPSASQPHSA. Low complexity predominate over residues 37–52; it reads SASPSTTPSASQPHSA. 4 RRM domains span residues 52-130, 140-217, 233-310, and 336-460; these read ASLY…WSQR, GNVF…HHIS, TNVY…RAQK, and VNLY…LAQR. 2 disordered regions span residues 367 to 417 and 602 to 645; these read VMRD…TEKK and MGQG…REEV. A compositionally biased stretch (basic and acidic residues) spans 379–417; the sequence is ESEKEKEKESNKENEKEGEEKTEEKPKESEEEPKKTEKK. The span at 605-631 shows a compositional bias: gly residues; sequence GIRGPGYGQGRGGAPVQGGPRPQGGRG. A PABC domain is found at 648 to 725; sequence TGGLTAQTLS…ALSVYDEYMK (78 aa). Residues 728-753 form a disordered region; that stretch reads GEGEAPAESAKPKEDAAETATEENKS. Basic and acidic residues predominate over residues 737-753; that stretch reads AKPKEDAAETATEENKS.

This sequence belongs to the polyadenylate-binding protein type-1 family.

The protein resides in the cytoplasm. Its subcellular location is the nucleus. Functionally, binds the poly(A) tail of mRNA. Appears to be an important mediator of the multiple roles of the poly(A) tail in mRNA biogenesis, stability and translation. In the nucleus, involved in both mRNA cleavage and polyadenylation. Is also required for efficient mRNA export to the cytoplasm. Acts in concert with a poly(A)-specific nuclease (PAN) to affect poly(A) tail shortening, which may occur concomitantly with either nucleocytoplasmic mRNA transport or translational initiation. In the cytoplasm, stimulates translation initiation and regulates mRNA decay through translation termination-coupled poly(A) shortening, probably mediated by PAN. This chain is Polyadenylate-binding protein, cytoplasmic and nuclear (pab1), found in Aspergillus fumigatus (strain ATCC MYA-4609 / CBS 101355 / FGSC A1100 / Af293) (Neosartorya fumigata).